The primary structure comprises 246 residues: Auxin-responsive protein IAA11 (246 aa).

An EAR-like (transcriptional repression) motif is present at residues 36 to 40 (LGLTL). Residues 136-235 (SMFVKVTMDG…SVRRLRIMKT (100 aa)) form the PB1 domain.

It belongs to the Aux/IAA family. Homodimers and heterodimers. Interacts with TPL. Preferentially expressed in stems and flowers.

It localises to the nucleus. Functionally, aux/IAA proteins are short-lived transcriptional factors that function as repressors of early auxin response genes at low auxin concentrations. Repression is thought to result from the interaction with auxin response factors (ARFs), proteins that bind to the auxin-responsive promoter element (AuxRE). Formation of heterodimers with ARF proteins may alter their ability to modulate early auxin response genes expression. In Arabidopsis thaliana (Mouse-ear cress), this protein is Auxin-responsive protein IAA11 (IAA11).